A 353-amino-acid chain; its full sequence is Photosystem II D2 protein (353 aa).

An N-acetylthreonine modification is found at Thr-2. Thr-2 bears the Phosphothreonine mark. Residues 41–61 (CAYFALGGWFTGTTFVTSWYT) traverse the membrane as a helical segment. Residue His-118 coordinates chlorophyll a. Residues 125–141 (GFMLRQFELARSVQLRP) form a helical membrane-spanning segment. Pheophytin a-binding residues include Gln-130 and Asn-143. The helical transmembrane segment at 153–166 (VFVSVFLIYPLGQS) threads the bilayer. Chlorophyll a is bound at residue His-198. Residues 208 to 228 (AALLCAIHGATVENTLFEDGD) form a helical membrane-spanning segment. Positions 215 and 262 each coordinate a plastoquinone. His-215 provides a ligand contact to Fe cation. A Fe cation-binding site is contributed by His-269. A helical transmembrane segment spans residues 279–295 (GLWMSALGVVGLALNLR).

Belongs to the reaction center PufL/M/PsbA/D family. In terms of assembly, PSII is composed of 1 copy each of membrane proteins PsbA, PsbB, PsbC, PsbD, PsbE, PsbF, PsbH, PsbI, PsbJ, PsbK, PsbL, PsbM, PsbT, PsbX, PsbY, PsbZ, Psb30/Ycf12, at least 3 peripheral proteins of the oxygen-evolving complex and a large number of cofactors. It forms dimeric complexes. It depends on The D1/D2 heterodimer binds P680, chlorophylls that are the primary electron donor of PSII, and subsequent electron acceptors. It shares a non-heme iron and each subunit binds pheophytin, quinone, additional chlorophylls, carotenoids and lipids. There is also a Cl(-1) ion associated with D1 and D2, which is required for oxygen evolution. The PSII complex binds additional chlorophylls, carotenoids and specific lipids. as a cofactor.

Its subcellular location is the plastid. The protein localises to the chloroplast thylakoid membrane. The catalysed reaction is 2 a plastoquinone + 4 hnu + 2 H2O = 2 a plastoquinol + O2. In terms of biological role, photosystem II (PSII) is a light-driven water:plastoquinone oxidoreductase that uses light energy to abstract electrons from H(2)O, generating O(2) and a proton gradient subsequently used for ATP formation. It consists of a core antenna complex that captures photons, and an electron transfer chain that converts photonic excitation into a charge separation. The D1/D2 (PsbA/PsbD) reaction center heterodimer binds P680, the primary electron donor of PSII as well as several subsequent electron acceptors. D2 is needed for assembly of a stable PSII complex. The polypeptide is Photosystem II D2 protein (Ranunculus macranthus (Large buttercup)).